Reading from the N-terminus, the 556-residue chain is Formate--tetrahydrofolate ligase (556 aa).

65–72 (TPAGEGKS) provides a ligand contact to ATP.

This sequence belongs to the formate--tetrahydrofolate ligase family.

The catalysed reaction is (6S)-5,6,7,8-tetrahydrofolate + formate + ATP = (6R)-10-formyltetrahydrofolate + ADP + phosphate. It functions in the pathway one-carbon metabolism; tetrahydrofolate interconversion. The chain is Formate--tetrahydrofolate ligase from Streptococcus agalactiae serotype Ia (strain ATCC 27591 / A909 / CDC SS700).